The sequence spans 341 residues: MDLVNDLILRAARGEPTPRPPVWFMRQAGRYQKAYRKLRERYTLPEIVQNPEVCAEVTLLPVKALGVDAAILFADITTPLYGMGVDLSLVENKGPVIHNPVRDEKGVEALRPLVPEEAVPFVLETIRILKRELPVPLIGFAGAPFTLASYLVEGGPSRRFLRVKALMYGEEALWHRLMEKLTEAMARYLRAQAEAGADLLQVFDSWVGALSPADYRRYVKPHMERLFQSLRPVGVPVIHFGVGTMGLLEDMKEAGGDVLGLDHHTPLPWARALLGATPVQGNLDPAVLLAPKGVIRREVQRILKENGGKSGHIFNLGHGIVPETPEENVRYVVELIQEVAA.

Residues 26-30 (RQAGR), aspartate 75, tyrosine 150, serine 205, and histidine 318 contribute to the substrate site.

The protein belongs to the uroporphyrinogen decarboxylase family. Homodimer.

Its subcellular location is the cytoplasm. The enzyme catalyses uroporphyrinogen III + 4 H(+) = coproporphyrinogen III + 4 CO2. The protein operates within porphyrin-containing compound metabolism; protoporphyrin-IX biosynthesis; coproporphyrinogen-III from 5-aminolevulinate: step 4/4. In terms of biological role, catalyzes the decarboxylation of four acetate groups of uroporphyrinogen-III to yield coproporphyrinogen-III. The polypeptide is Uroporphyrinogen decarboxylase (Thermus thermophilus (strain ATCC 27634 / DSM 579 / HB8)).